The primary structure comprises 539 residues: uncharacterized protein (539 aa).

Transmembrane regions (helical) follow at residues 4 to 22, 27 to 46, 56 to 78, 90 to 112, and 155 to 177; these read LVEN…GLLL, IFGF…ALST, LIYV…PGFF, ALTL…VLNI, and PVVA…IAIF. 2 RCK C-terminal domains span residues 187-269 and 271-352; these read KEAE…AIGE and IDGD…LLGD. 4 helical membrane-spanning segments follow: residues 360–382, 422–444, 453–475, and 516–538; these read FNLL…EFPL, LALR…GAGF, SLTI…LFVG, and YTSV…LFLL.

This sequence belongs to the AAE transporter (TC 2.A.81) family.

Its subcellular location is the cell membrane. This is an uncharacterized protein from Corynebacterium glutamicum (strain ATCC 13032 / DSM 20300 / JCM 1318 / BCRC 11384 / CCUG 27702 / LMG 3730 / NBRC 12168 / NCIMB 10025 / NRRL B-2784 / 534).